Consider the following 449-residue polypeptide: Maturation protein A (449 aa).

The protein belongs to the Leviviricetes maturation protein family. As to quaternary structure, interacts with the host pilus.

The protein resides in the virion. Functionally, the maturation protein is required for the typical attachment of the phage to the side of the bacterial F-pili. Binds to sequences located toward each end of the genome, hence circularizing it. The RNA genome-maturation protein A complex is released from the capsid upon host receptor binding. Maturation protein A enters the cell along with the viral RNA. The sequence is that of Maturation protein A from Pseudomonas aeruginosa (Bacteriophage PP7).